We begin with the raw amino-acid sequence, 254 residues long: Translation initiation factor 2 subunit alpha (254 aa).

Residues 10–81 form the S1 motif domain; sequence GDLVVVKITE…ERKVVDLSLK (72 aa).

This sequence belongs to the eIF-2-alpha family. Heterotrimer composed of an alpha, a beta and a gamma chain.

EIF-2 functions in the early steps of protein synthesis by forming a ternary complex with GTP and initiator tRNA. This chain is Translation initiation factor 2 subunit alpha, found in Thermoplasma acidophilum (strain ATCC 25905 / DSM 1728 / JCM 9062 / NBRC 15155 / AMRC-C165).